Reading from the N-terminus, the 186-residue chain is Ribosome-recycling factor (186 aa).

Belongs to the RRF family.

The protein localises to the cytoplasm. Functionally, responsible for the release of ribosomes from messenger RNA at the termination of protein biosynthesis. May increase the efficiency of translation by recycling ribosomes from one round of translation to another. This chain is Ribosome-recycling factor, found in Herminiimonas arsenicoxydans.